The sequence spans 219 residues: 2-hydroxy-3-keto-5-methylthiopentenyl-1-phosphate phosphatase (219 aa).

The protein belongs to the HAD-like hydrolase superfamily. MtnX family.

It carries out the reaction 2-hydroxy-5-methylsulfanyl-3-oxopent-1-enyl phosphate + H2O = 1,2-dihydroxy-5-(methylsulfanyl)pent-1-en-3-one + phosphate. Its pathway is amino-acid biosynthesis; L-methionine biosynthesis via salvage pathway; L-methionine from S-methyl-5-thio-alpha-D-ribose 1-phosphate: step 4/6. In terms of biological role, dephosphorylates 2-hydroxy-3-keto-5-methylthiopentenyl-1-phosphate (HK-MTPenyl-1-P) yielding 1,2-dihydroxy-3-keto-5-methylthiopentene (DHK-MTPene). This Bacillus cytotoxicus (strain DSM 22905 / CIP 110041 / 391-98 / NVH 391-98) protein is 2-hydroxy-3-keto-5-methylthiopentenyl-1-phosphate phosphatase.